Consider the following 311-residue polypeptide: Splicing factor spf30 (311 aa).

A Tudor domain is found at D76–E139. 2 disordered regions span residues R154 to S183 and S276 to S311. Positions A168–S183 are enriched in polar residues. Phosphoserine is present on S173. Residues H301 to S311 show a composition bias toward basic and acidic residues.

The protein belongs to the SMN family. Associates with spliceosomes.

The protein localises to the nucleus. Functionally, involved in spliceosome assembly. The chain is Splicing factor spf30 (spf30) from Schizosaccharomyces pombe (strain 972 / ATCC 24843) (Fission yeast).